The following is a 458-amino-acid chain: MSQNPPLLRPDLARARVPDDARPGQPRIGMVSLGCPKALVDSERILTRLRAEGYAISPDYTGAEAVIVNTCGFLDSAKLESLEAIGEALEANGKVIVTGCLGAEPEYITGAHPTVLAVTGPQQYEQVLDAVHGAVPPAPDPFIDLLPPAGVKLTPRHYAYLKIAEGCDHKCKFCIIPDMRGKLVSRPQTAVMREAEKLVDSGVKELLIISQDTSAYGVDWKDRNKAGDEKFPILNLSRDLSTLGAWVRLHYVYPYPHVRELIPLMADPANGLLPYLDIPFQHAHPDVLKRMARPAAASRTLDEIAAWRRDCPNITLRSTFIVGYPGETEAEFQTLLDWLDEAQLDRIGCFQYENVDGARSNALPDHVAPEVKQDRWDRFMEKAQAISEAKLQAKVGRTMQVLVDSVDEEGATCRTVADAPEIDGNLFIDEGFDGLTPGDLVTVEVDEASEYDLWGKLT.

One can recognise an MTTase N-terminal domain in the interval 26-136 (PRIGMVSLGC…VLDAVHGAVP (111 aa)). 6 residues coordinate [4Fe-4S] cluster: C35, C71, C100, C167, C171, and C174. The Radical SAM core domain occupies 153 to 389 (LTPRHYAYLK…MEKAQAISEA (237 aa)). Residues 392–458 (QAKVGRTMQV…SEYDLWGKLT (67 aa)) form the TRAM domain.

This sequence belongs to the methylthiotransferase family. RimO subfamily. The cofactor is [4Fe-4S] cluster.

The protein localises to the cytoplasm. It catalyses the reaction L-aspartate(89)-[ribosomal protein uS12]-hydrogen + (sulfur carrier)-SH + AH2 + 2 S-adenosyl-L-methionine = 3-methylsulfanyl-L-aspartate(89)-[ribosomal protein uS12]-hydrogen + (sulfur carrier)-H + 5'-deoxyadenosine + L-methionine + A + S-adenosyl-L-homocysteine + 2 H(+). Functionally, catalyzes the methylthiolation of an aspartic acid residue of ribosomal protein uS12. This Jannaschia sp. (strain CCS1) protein is Ribosomal protein uS12 methylthiotransferase RimO.